Reading from the N-terminus, the 183-residue chain is dCTP deaminase (183 aa).

Residues 97–102 and Asp113 contribute to the dCTP site; that span reads RSSFAR. The active-site Proton donor/acceptor is Glu123. Residues Tyr155 and Gln162 each coordinate dCTP.

Belongs to the dCTP deaminase family. In terms of assembly, homotrimer.

It catalyses the reaction dCTP + H2O + H(+) = dUTP + NH4(+). Its pathway is pyrimidine metabolism; dUMP biosynthesis; dUMP from dCTP (dUTP route): step 1/2. Catalyzes the deamination of dCTP to dUTP. This is dCTP deaminase from Sulfurisphaera tokodaii (strain DSM 16993 / JCM 10545 / NBRC 100140 / 7) (Sulfolobus tokodaii).